A 549-amino-acid polypeptide reads, in one-letter code: Glucose-6-phosphate isomerase (549 aa).

Residue E355 is the Proton donor of the active site. Residues H386 and K514 contribute to the active site.

Belongs to the GPI family.

Its subcellular location is the cytoplasm. The enzyme catalyses alpha-D-glucose 6-phosphate = beta-D-fructose 6-phosphate. It functions in the pathway carbohydrate biosynthesis; gluconeogenesis. The protein operates within carbohydrate degradation; glycolysis; D-glyceraldehyde 3-phosphate and glycerone phosphate from D-glucose: step 2/4. Functionally, catalyzes the reversible isomerization of glucose-6-phosphate to fructose-6-phosphate. The chain is Glucose-6-phosphate isomerase from Sodalis glossinidius (strain morsitans).